The primary structure comprises 425 residues: Sucrose-phosphatase 2 (425 aa).

This sequence belongs to the sucrose phosphatase family. In terms of assembly, homodimer. Mg(2+) serves as cofactor.

The enzyme catalyses sucrose 6(F)-phosphate + H2O = sucrose + phosphate. The protein operates within glycan biosynthesis; sucrose biosynthesis; sucrose from D-fructose 6-phosphate and UDP-alpha-D-glucose: step 2/2. Its activity is regulated as follows. Inhibited by EDTA. In terms of biological role, catalyzes the final step of sucrose synthesis. This is Sucrose-phosphatase 2 (SPP2) from Nicotiana tabacum (Common tobacco).